A 1750-amino-acid chain; its full sequence is Brefeldin A-inhibited guanine nucleotide-exchange protein 3 (1750 aa).

Residue Ala2 is modified to N-acetylalanine. Disordered stretches follow at residues 44 to 65 (LRSP…IPGP) and 565 to 596 (EEGS…SSGN). A compositionally biased stretch (polar residues) spans 47 to 61 (PENSSPVADSESGSS). The span at 565–588 (EEGSHPVENGKGDGGHGGFERSDS) shows a compositional bias: basic and acidic residues. Position 586 is a phosphoserine (Ser586). Residues 601–788 (AIEQRRAYKL…RALYERISRN (188 aa)) form the SEC7 domain. The active site involves Glu703. Position 1307 is a phosphoserine (Ser1307).

In terms of assembly, homodimer.

It localises to the cytoplasm. The protein localises to the cytosol. The protein resides in the membrane. With respect to regulation, inhibited by brefeldin A. Activates the ARF proteins by exchanging bound GDP for free GTP. Plays a role in vesicular protein sorting. Involved both in the nuclear division phase and in the nuclear fusion phase. This Arabidopsis thaliana (Mouse-ear cress) protein is Brefeldin A-inhibited guanine nucleotide-exchange protein 3 (BIG3).